The chain runs to 157 residues: MQKFPMTGPGLQNLEAELRHLKSEERPAIIRAIAEARSHGDLSENAEYHSARERQSFIEGRIAELEEIISAAEVIDPSTLSGDTVKFGAHVELIDEESDKEVTYQIVGVHEADIKAGRISVTSPLAKSLIGKKPGDTVSVPAPGGDRSYEILAVRFG.

Positions 46–73 (AEYHSARERQSFIEGRIAELEEIISAAE) form a coiled coil.

Belongs to the GreA/GreB family.

Necessary for efficient RNA polymerase transcription elongation past template-encoded arresting sites. The arresting sites in DNA have the property of trapping a certain fraction of elongating RNA polymerases that pass through, resulting in locked ternary complexes. Cleavage of the nascent transcript by cleavage factors such as GreA or GreB allows the resumption of elongation from the new 3'terminus. GreA releases sequences of 2 to 3 nucleotides. The chain is Transcription elongation factor GreA from Acidiphilium cryptum (strain JF-5).